A 280-amino-acid polypeptide reads, in one-letter code: NAD(+) hydrolase TirS (280 aa).

The stretch at Met22–Arg94 forms a coiled coil. The TIR domain occupies Ile141–Ile275. Residues Ser150–Ser151 and Glu180 contribute to the NAD(+) site. Glu216 is a catalytic residue.

It is found in the secreted. The enzyme catalyses NAD(+) + H2O = ADP-D-ribose + nicotinamide + H(+). It catalyses the reaction NADP(+) + H2O = ADP-D-ribose 2'-phosphate + nicotinamide + H(+). Virulence factor that suppresses host Toll-like receptor 2 (TLR2)-mediated NF-kappa-B signaling upon infection. NAD(+) hydrolase (NADase) that catalyzes cleavage of NAD(+) into ADP-D-ribose (ADPR) and nicotinamide. Also able to hydrolyze NADP(+), but not other NAD(+)-related molecules. Able to reduce NAD(+) levels in host cells. The chain is NAD(+) hydrolase TirS from Staphylococcus aureus (strain MSSA476).